A 616-amino-acid chain; its full sequence is Chaperone protein HscA (616 aa).

It belongs to the heat shock protein 70 family.

Functionally, chaperone involved in the maturation of iron-sulfur cluster-containing proteins. Has a low intrinsic ATPase activity which is markedly stimulated by HscB. Involved in the maturation of IscU. This Pectobacterium atrosepticum (strain SCRI 1043 / ATCC BAA-672) (Erwinia carotovora subsp. atroseptica) protein is Chaperone protein HscA.